A 273-amino-acid chain; its full sequence is Dermonecrotic toxin LdSicTox-alphaIB3aii (273 aa).

Histidine 5 is an active-site residue. Mg(2+) contacts are provided by glutamate 25 and aspartate 27. The active-site Nucleophile is the histidine 41. Disulfide bonds link cysteine 45/cysteine 51 and cysteine 47/cysteine 190. Position 85 (aspartate 85) interacts with Mg(2+).

Belongs to the arthropod phospholipase D family. Class II subfamily. Mg(2+) is required as a cofactor. Expressed by the venom gland.

The protein localises to the secreted. The enzyme catalyses an N-(acyl)-sphingosylphosphocholine = an N-(acyl)-sphingosyl-1,3-cyclic phosphate + choline. It carries out the reaction an N-(acyl)-sphingosylphosphoethanolamine = an N-(acyl)-sphingosyl-1,3-cyclic phosphate + ethanolamine. The catalysed reaction is a 1-acyl-sn-glycero-3-phosphocholine = a 1-acyl-sn-glycero-2,3-cyclic phosphate + choline. It catalyses the reaction a 1-acyl-sn-glycero-3-phosphoethanolamine = a 1-acyl-sn-glycero-2,3-cyclic phosphate + ethanolamine. Functionally, dermonecrotic toxins cleave the phosphodiester linkage between the phosphate and headgroup of certain phospholipids (sphingolipid and lysolipid substrates), forming an alcohol (often choline) and a cyclic phosphate. This toxin acts on sphingomyelin (SM). It may also act on ceramide phosphoethanolamine (CPE), lysophosphatidylcholine (LPC) and lysophosphatidylethanolamine (LPE), but not on lysophosphatidylserine (LPS), and lysophosphatidylglycerol (LPG). It acts by transphosphatidylation, releasing exclusively cyclic phosphate products as second products. Induces dermonecrosis, hemolysis, increased vascular permeability, edema, inflammatory response, and platelet aggregation. In Loxosceles deserta (Desert recluse spider), this protein is Dermonecrotic toxin LdSicTox-alphaIB3aii.